Reading from the N-terminus, the 347-residue chain is Protein-glutamate methylesterase/protein-glutamine glutaminase 3 (347 aa).

Positions 3–120 (QVFIVDDSAV…KNFLEESEIL (118 aa)) constitute a Response regulatory domain. At Asp54 the chain carries 4-aspartylphosphate. A CheB-type methylesterase domain is found at 159-347 (IDTTDKLIAI…SKIVGEVQYF (189 aa)). Active-site residues include Ser171, His197, and Asp293.

It belongs to the CheB family. Post-translationally, phosphorylated by CheA. Phosphorylation of the N-terminal regulatory domain activates the methylesterase activity.

It localises to the cytoplasm. The enzyme catalyses [protein]-L-glutamate 5-O-methyl ester + H2O = L-glutamyl-[protein] + methanol + H(+). The catalysed reaction is L-glutaminyl-[protein] + H2O = L-glutamyl-[protein] + NH4(+). Its function is as follows. Involved in chemotaxis. Part of a chemotaxis signal transduction system that modulates chemotaxis in response to various stimuli. Catalyzes the demethylation of specific methylglutamate residues introduced into the chemoreceptors (methyl-accepting chemotaxis proteins or MCP) by CheR. Also mediates the irreversible deamidation of specific glutamine residues to glutamic acid. This is Protein-glutamate methylesterase/protein-glutamine glutaminase 3 from Leptospira interrogans serogroup Icterohaemorrhagiae serovar copenhageni (strain Fiocruz L1-130).